Here is a 171-residue protein sequence, read N- to C-terminus: Small ribosomal subunit protein uS13 (171 aa).

Residues 1–11 show a composition bias toward polar residues; it reads MAKGSANNVKV. Disordered stretches follow at residues 1 to 24 and 144 to 164; these read MAKGSANNVKVNQDAGKSQPEKKE and EKGKKVRGQRTRSNGRKGLSI. Over residues 144–158 the composition is skewed to basic residues; sequence EKGKKVRGQRTRSNG.

The protein belongs to the universal ribosomal protein uS13 family. Part of the 30S ribosomal subunit. Forms a loose heterodimer with protein S19. Forms two bridges to the 50S subunit in the 70S ribosome.

Its function is as follows. Located at the top of the head of the 30S subunit, it contacts several helices of the 16S rRNA. In the 70S ribosome it contacts the 23S rRNA (bridge B1a) and protein L5 of the 50S subunit (bridge B1b), connecting the 2 subunits; these bridges are implicated in subunit movement. In Thermoplasma acidophilum (strain ATCC 25905 / DSM 1728 / JCM 9062 / NBRC 15155 / AMRC-C165), this protein is Small ribosomal subunit protein uS13.